The primary structure comprises 550 residues: Hydroxylamine reductase (550 aa).

[2Fe-2S] cluster contacts are provided by Cys-3, Cys-6, Cys-18, and Cys-25. Positions 249, 273, 317, 405, 433, 458, 492, and 494 each coordinate hybrid [4Fe-2O-2S] cluster. Cys-405 carries the cysteine persulfide modification.

Belongs to the HCP family. [2Fe-2S] cluster serves as cofactor. Hybrid [4Fe-2O-2S] cluster is required as a cofactor.

It localises to the cytoplasm. The catalysed reaction is A + NH4(+) + H2O = hydroxylamine + AH2 + H(+). Functionally, catalyzes the reduction of hydroxylamine to form NH(3) and H(2)O. This is Hydroxylamine reductase from Yersinia pseudotuberculosis serotype O:1b (strain IP 31758).